A 387-amino-acid chain; its full sequence is Patatin-11 (387 aa).

An N-terminal signal peptide occupies residues Met1–Ala23. A PNPLA domain is found at Leu32 to Leu230. Positions Gly36–Gly41 match the GXGXXG motif. A GXSXG motif is present at residues Gly75–Gly79. Residue Ser77 is the Nucleophile of the active site. Residue Asn115 is glycosylated (N-linked (GlcNAc...) asparagine). Asp216 (proton acceptor) is an active-site residue. The DGA/G motif lies at Asp216–Gly218. Positions Glu322–Ala385 form a coiled coil. Asn326 carries N-linked (GlcNAc...) asparagine glycosylation.

Belongs to the patatin family. In terms of tissue distribution, tuber.

It localises to the vacuole. Its function is as follows. Probable lipolytic acyl hydrolase (LAH), an activity which is thought to be involved in the response of tubers to pathogens. In Solanum tuberosum (Potato), this protein is Patatin-11.